Here is a 275-residue protein sequence, read N- to C-terminus: 4-diphosphocytidyl-2-C-methyl-D-erythritol kinase (275 aa).

Lysine 14 is a catalytic residue. 94-104 (PMEAGLGGGSA) lines the ATP pocket. Aspartate 134 is a catalytic residue.

It belongs to the GHMP kinase family. IspE subfamily.

The catalysed reaction is 4-CDP-2-C-methyl-D-erythritol + ATP = 4-CDP-2-C-methyl-D-erythritol 2-phosphate + ADP + H(+). It functions in the pathway isoprenoid biosynthesis; isopentenyl diphosphate biosynthesis via DXP pathway; isopentenyl diphosphate from 1-deoxy-D-xylulose 5-phosphate: step 3/6. Catalyzes the phosphorylation of the position 2 hydroxy group of 4-diphosphocytidyl-2C-methyl-D-erythritol. This chain is 4-diphosphocytidyl-2-C-methyl-D-erythritol kinase, found in Thermosipho africanus (strain TCF52B).